A 457-amino-acid chain; its full sequence is Transmembrane protease serine 5 (457 aa).

A disordered region spans residues 1–21; the sequence is MSLMLDDQPPMEAQYAEEGPG. Residues 1–49 are Cytoplasmic-facing; that stretch reads MSLMLDDQPPMEAQYAEEGPGPGIFRAEPGDQQHPISQAVCWRSMRRGC. Residues 50 to 70 form a helical; Signal-anchor for type II membrane protein membrane-spanning segment; it reads AVLGALGLLAGAGVGSWLLVL. The Extracellular segment spans residues 71–457; sequence YLCPAASQPI…IHDTAQDSLL (387 aa). An SRCR domain is found at 112–207; the sequence is FRINSEDFLL…SGQVVSLRCS (96 aa). Intrachain disulfides connect Cys135–Cys196, Cys148–Cys206, Cys209–Cys328, Cys243–Cys259, Cys342–Cys411, Cys374–Cys390, and Cys401–Cys429. N-linked (GlcNAc...) asparagine glycans are attached at residues Asn163, Asn170, and Asn195. Residues 218-453 enclose the Peptidase S1 domain; it reads IVGGQSVAPG…FLDWIHDTAQ (236 aa). Catalysis depends on charge relay system residues His258 and Asp308. Residues Asn319 and Asn375 are each glycosylated (N-linked (GlcNAc...) asparagine). Ser405 serves as the catalytic Charge relay system.

It belongs to the peptidase S1 family. In terms of tissue distribution, brain-specific. Predominantly expressed in neurons, in their axons, and at the synapses of motoneurons in the spinal cord.

Its subcellular location is the cell membrane. Functionally, may play a role in hearing. This chain is Transmembrane protease serine 5 (TMPRSS5), found in Homo sapiens (Human).